The following is a 310-amino-acid chain: Protein N-terminal asparagine amidohydrolase (310 aa).

Monomer.

The protein localises to the cytoplasm. It carries out the reaction N-terminal L-asparaginyl-[protein] + H2O + H(+) = N-terminal L-aspartyl-[protein] + NH4(+). In terms of biological role, N-terminal asparagine deamidase that mediates deamidation of N-terminal asparagine residues to aspartate. Required for the ubiquitin-dependent turnover of intracellular proteins that initiate with Met-Asn. These proteins are acetylated on the retained initiator methionine and can subsequently be modified by the removal of N-acetyl methionine by acylaminoacid hydrolase (AAH). Conversion of the resulting N-terminal asparagine to aspartate by NTAN1/PNAD renders the protein susceptible to arginylation, polyubiquitination and degradation as specified by the N-end rule. This enzyme does not act on substrates with internal or C-terminal asparagines and does not act on glutamine residues in any position. The chain is Protein N-terminal asparagine amidohydrolase from Mus musculus (Mouse).